We begin with the raw amino-acid sequence, 189 residues long: Putative manganese efflux pump MntP (189 aa).

The next 6 membrane-spanning stretches (helical) occupy residues 6–26, 39–59, 71–91, 106–126, 131–151, and 169–189; these read IFGI…AAGV, LAWH…YAGL, WIAF…SFDA, LVLL…SLSV, VWMP…GGLM, and VGAG…GVFY.

Belongs to the MntP (TC 9.B.29) family.

The protein resides in the cell inner membrane. In terms of biological role, probably functions as a manganese efflux pump. The sequence is that of Putative manganese efflux pump MntP from Desulfosudis oleivorans (strain DSM 6200 / JCM 39069 / Hxd3) (Desulfococcus oleovorans).